Consider the following 422-residue polypeptide: Glutamate-1-semialdehyde 2,1-aminomutase (422 aa).

An N6-(pyridoxal phosphate)lysine modification is found at K258.

It belongs to the class-III pyridoxal-phosphate-dependent aminotransferase family. HemL subfamily. As to quaternary structure, homodimer. Requires pyridoxal 5'-phosphate as cofactor.

The protein resides in the cytoplasm. The catalysed reaction is (S)-4-amino-5-oxopentanoate = 5-aminolevulinate. It participates in porphyrin-containing compound metabolism; protoporphyrin-IX biosynthesis; 5-aminolevulinate from L-glutamyl-tRNA(Glu): step 2/2. This is Glutamate-1-semialdehyde 2,1-aminomutase from Chlamydia muridarum (strain MoPn / Nigg).